We begin with the raw amino-acid sequence, 285 residues long: Nucleotide-binding protein Pmen_0867 (285 aa).

8 to 15 (GRSGSGKS) contributes to the ATP binding site. 60–63 (DARN) is a GTP binding site.

Belongs to the RapZ-like family.

In terms of biological role, displays ATPase and GTPase activities. The chain is Nucleotide-binding protein Pmen_0867 from Ectopseudomonas mendocina (strain ymp) (Pseudomonas mendocina).